Reading from the N-terminus, the 5405-residue chain is MGALWSWWILWAGATLLWGLTQEASVDLKNTGREEFLTAFLQNYQLAYSKAYPRLLISSLSESPASVSILSQADNTSKKVTVRPGESVMVNISAKAEMIGSKIFQHAVVIHSDYAISVQALNAKPDTAELTLLRPIQALGTEYFVLTPPGTSARNVKEFAVVAGAAGASVSVTLKGSVTFNGKFYPAGDVLRVTLQPYNVAQLQSSVDLSGSKVTASSPVAVLSGHSCAQKHTTCNHVVEQLLPTSAWGTHYVVPTLASQSRYDLAFVVASQATKLTYNHGGITGSRGLQAGDVVEFEVRPSWPLYLSANVGIQVLLFGTGAIRNEVTYDPYLVLIPDVAAYCPAYVVKSVPGCEGVALVVAQTKAISGLTIDGHAVGAKLTWEAVPGSEFSYAEVELGTADMIHTAEATTNLGLLTFGLAKAIGYATAADCGRTVLSPVEPSCEGMQCAAGQRCQVVGGKAGCVAESTAVCRAQGDPHYTTFDGRRYDMMGTCSYTMVELCSEDDTLPAFSVEAKNEHRGSRRVSYVGLVTVRAYSHSVSLTRGEVGFVLVDNQRSRLPVSLSEGRLRVYQSGPRAVVELVFGLVVTYDWDCQLALSLPARFQDQVCGLCGNYNGDPADDFLTPDGALAPDAVEFASSWKLDDGDYLCEDGCQNNCPACTPGQAQHYEGDRLCGMLTKLDGPFAVCHDTLDPRPFLEQCVYDLCVVGGERLSLCRGLSAYAQACLELGISVGDWRSPANCPLSCPANSRYELCGPACPTSCNGAAAPSNCSGRPCVEGCVCLPGFVASGGACVPASSCGCTFQGLQLAPGQEVWADELCQRRCTCNGATHQVTCRDKQSCPAGERCSVQNGLLGCYPDRFGTCQGSGDPHYVSFDGRRFDFMGTCTYLLVGSCGQNAALPAFRVLVENEHRGSQTVSYTRAVRVEARGVKVAVRREYPGQVLVDDVLQYLPFQAADGQVQVFRQGRDAVVRTDFGLTVTYDWNARVTAKVPSSYAEALCGLCGNFNGDPADDLALRGGGQAANALAFGNSWQEETRPGCGATEPGDCPKLDSLVAQQLQSKNECGILADPKGPFRECHSKLDPQGAVRDCVYDRCLLPGQSGPLCDALATYAAACQAAGATVHPWRSEELCPLSCPPHSHYEACSYGCPLSCGDLPVPGGCGSECHEGCVCDEGFALSGESCLPLASCGCVHQGTYHPPGQTFYPGPGCDSLCHCQEGGLVSCESSSCGPHEACQPSGGSLGCVAVGSSTCQASGDPHYTTFDGRRFDFMGTCVYVLAQTCGTRPGLHRFAVLQENVAWGNGRVSVTRVITVQVANFTLRLEQRQWKVTVNGVDMKLPVVLANGQIRASQHGSDVVIETDFGLRVAYDLVYYVRVTVPGNYYQQMCGLCGNYNGDPKDDFQKPNGSQAGNANEFGNSWEEVVPDSPCLPPTPCPPGSEDCIPSHKCPPELEKKYQKEEFCGLLSSPTGPLSSCHKLVDPQGPLKDCIFDLCLGGGNLSILCSNIHAYVSACQAAGGHVEPWRTETFCPMECPPNSHYELCADTCSLGCSALSAPPQCQDGCAEGCQCDSGFLYNGQACVPIQQCGCYHNGVYYEPEQTVLIDNCRQQCTCHAGKGMVCQEHSCKPGQVCQPSGGILSCVTKDPCHGVTCRPQETCKEQGGQGVCLPNYEATCWLWGDPHYHSFDGRKFDFQGTCNYVLATTGCPGVSTQGLTPFTVTTKNQNRGNPAVSYVRVVTVAALGTNISIHKDEIGKVRVNGVLTALPVSVADGRISVTQGASKALLVADFGLQVSYDWNWRVDVTLPSSYHGAVCGLCGNMDRNPNNDQVFPNGTLAPSIPIWGGSWRAPGWDPLCWDECRGSCPTCPEDRLEQYEGPGFCGPLAPGTGGPFTTCHAHVPPESFFKGCVLDVCMGGGDRDILCKALASYVAACQAAGVVIEDWRAQVGCEITCPENSHYEVCGSPCPASCPSPAPLTTPAVCEGPCVEGCQCDAGFVLSADRCVPLNNGCGCWANGTYHEAGSEFWADGTCSQWCRCGPGGGSLVCTPASCGLGEVCGLLPSGQHGCQPVSTAECQAWGDPHYVTLDGHRFNFQGTCEYLLSAPCHGPPLGAENFTVTVANEHRGSQAVSYTRSVTLQIYNHSLTLSARWPRKLQVDGVFVTLPFQLDSLLHAHLSGADVVVTTTSGLSLAFDGDSFVRLRVPAAYAGSLCGLCGNYNQDPADDLKAVGGKPAGWQVGGAQGCGECVSKPCPSPCTPEQQESFGGPDACGVISATDGPLAPCHGLVPPAQYFQGCLLDACQVQGHPGGLCPAVATYVAACQAAGAQLREWRRPDFCPFQCPAHSHYELCGDSCPGSCPSLSAPEGCESACREGCVCDAGFVLSGDTCVPVGQCGCLHDDRYYPLGQTFYPGPGCDSLCRCREGGEVSCEPSSCGPHETCRPSGGSLGCVAVGSTTCQASGDPHYTTFDGRRFDFMGTCVYVLAQTCGTRPGLHRFAVLQENVAWGNGRVSVTRVITVQVANFTLRLEQRQWKVTVNGVDMKLPVVLANGQIRASQHGSDVVIETDFGLRVAYDLVYYVRVTVPGNYYQLMCGLCGNYNGDPKDDFQKPNGSQAGNANEFGNSWEEVVPDSPCLPPPTCPPGSEGCIPSEECPPELEKKYQKEEFCGLLSSPTGPLSSCHKLVDPQGPLKDCIFDLCLGGGNLSILCSNIHAYVSACQAAGGQVEPWRNETFCPMECPQNSHYELCADTCSLGCSALSAPLQCPDGCAEGCQCDSGFLYNGQACVPIQQCGCYHNGAYYEPEQTVLIDNCRQQCTCHVGKVVVCQEHSCKPGQVCQPSGGILSCVNKDPCHGVTCRPQETCKEQGGQGVCLPNYEATCWLWGDPHYHSFDGRKFDFQGTCNYVLATTGCPGVSTQGLTPFTVTTKNQNRGNPAVSYVRVVTVAALGTNISIHKDEIGKVRVNGVLTALPVSVADGRISVTQGASKALLVADFGLQVSYDWNWRVDVTLPSSYHGAVCGLCGNMDRNPNNDQVFPNGTLAPSIPIWGGSWRAPGWDPLCWDECRGSCPTCPEDRLEQYEGPGFCGPLAPGTGGPFTTCHAHVPPESFFKGCVLDVCMGGGDRDILCKALASYVAACQAAGVVIEDWRAQVGCEITCPENSHYEVCGPPCPASCPSPAPLTTPAVCEGPCVEGCQCDAGFVLSADRCVPLNNGCGCWANGTYHEAGSEFWADGTCSQWCRCGPGGGSLVCTPASCGLGEVCGLLPSGQHGCQPVSTAECQAWGDPHYVTLDGHRFDFQGTCEYLLSAPCHGPPLGAENFTVTVANEHRGSQAVSYTRSVTLQIYNHSLTLSARWPRKLQVDGVFVTLPFQLDSLLHAHLSGADVVVTTTSGLSLAFDGDSFVRLRVPAAYAGSLCGLCGNYNQDPADDLKAVGGKPAGWQVGGAQGCGECVSKPCPSPCTPEQQESFGGPDACGVISATDGPLAPCHGLVPPAQYFQGCLLDACQVQGHPGGLCPAVATYVAACQAAGAQLREWRRPDFCPFQCPAHSHYELCGDSCPGSCPSLSAPEGCESACREGCVCDAGFVLSGDTCVPVGQCGCLHDDRYYPLGQTFYPGPGCDSLCRCREGGEVSCEPSSCGPHETCRPSGGSLGCVAVGSTTCQASGDPHYTTFDGHRFDFMGTCVYVLAQTCGTRPGLHRFAVLQENVAWGNGRVSVTRVITVQVANFTLRLEQRQWKVTVNGVDMKLPVVLANGQIRASQHGSDVVIETDFGLRVAYDLVYYVRVTVPGNYYQLMCGLCGNYNGDPKDDFQKPNGSQAGNANEFGNSWEEVVPDSPCLPPPTCPPGSAGCIPSDKCPPELEKKYQKEEFCGLLSSPTGPLSSCHKLVDPQGPLKDCIFDLCLGGGNLSILCSNIHAYVSACQAAGGHVEPWRNETFCPMECPQNSHYELCADTCSLGCSALSAPLQCPDGCAEGCQCDSGFLYNGQACVPIQQCGCYHNGVYYEPEQTVLIDNCRQQCTCHVGKVVVCQEHSCKPGQVCQPSGGILSCVTKDPCHGVTCRPQETCKEQGGQGVCLPNYEATCWLWGDPHYHSFDGRKFDFQGTCNYVLATTGCPGVSTQGLTPFTVTTKNQNRGNPAVSYVRVVTVAALGTNISIHKDEIGKVRVNGVLTALPVSVADGRISVAQGASKALLVADFGLQVSYDWNWRVDVTLPSSYHGAVCGLCGNMDRNPNNDQVFPNGTLAPSIPIWGGSWRAPGWDPLCWDECRGSCPTCPEDRLEQYEGPGFCGPLSSGTGGPFTTCHAHVPPESFFKGCVLDVCMGGGDRDILCKALASYVAACQAAGVVIEDWRAQVGCEITCPENSHYEVCGPPCPASCPSPAPLTTPAVCEGPCVEGCQCDAGFVLSADRCVPLNNGCGCWANGTYHEAGSEFWADGTCSQWCRCGPGGGSLVCTPASCGLGEVCGLLPSGQHGCQPVSTAECQAWGDPHYVTLDGHRFDFQGTCEYLLSAPCHGPPLGAENFTVTVANEHRGSQAVSYTRSVTLQIYNHSLTLSARWPRKLQVDGVFVALPFQLDSLLHAHLSGADVVVTTTSGLSLAFDGDSFVRLRVPAAYAASLCGLCGNYNQDPADDLKAVGGKPAGWQVGGAQGCGECVSKPCPSPCTPEQQESFGGPDACGVISATDGPLAPCHGLVPPAQYFQGCLLDACQVQGHPGGLCPAVATYVAACQAAGAQLGEWRRPDFCPLQCPAHSHYELCGDSCPVSCPSLSAPEGCESACREGCVCDAGFVLSGDTCVPVGQCGCLHDGRYYPLGEVFYPGPECERRCECGPGGHVTCQEGAACGPHEECRLEDGVQACHATGCGRCLANGGIHYITLDGRVYDLHGSCSYVLAQVCHPKPGDEDFSIVLEKNAAGDLQRLLVTVAGQVVSLAQGQQVTVDGEAVALPVAVGRVRVTAEGRNMVLQTTKGLRLLFDGDAHLLMSIPSPFRGRLCGLCGNFNGNWSDDFVLPNGSAASSVETFGAAWRAPGSSKGCGEGCGPQGCPVCLAEETAPYESNEACGQLRNPQGPFATCQAVLSPSEYFRQCVYDLCAQKGDKAFLCRSLAAYTAACQAAGVAVKPWRTDSFCPLHCPAHSHYSICTRTCQGSCAALSGLTGCTTRCFEGCECDDRFLLSQGVCIPVQDCGCTHNGRYLPVNSSLLTSDCSERCSCSSSSGLTCQAAGCPPGRVCEVKAEARNCWATRGLCVLSVGANLTTFDGARGATTSPGVYELSSRCPGLQNTIPWYRVVAEVQICHGKTEAVGQVHIFFQDGMVTLTPNKGVWVNGLRVDLPAEKLASVSVSRTPDGSLLVRQKAGVQVWLGANGKVAVIVSNDHAGKLCGACGNFDGDQTNDWHDSQEKPAMEKWRAQDFSPCYG.

The signal sequence occupies residues 1 to 23 (MGALWSWWILWAGATLLWGLTQE). The igGFc-binding stretch occupies residues 24–450 (ASVDLKNTGR…EPSCEGMQCA (427 aa)). Residues Asn75 and Asn91 are each glycosylated (N-linked (GlcNAc...) asparagine). The VWFD 1 domain occupies 470–650 (AVCRAQGDPH…KLDDGDYLCE (181 aa)). 2 disulfide bridges follow: Cys472/Cys611 and Cys494/Cys649. One can recognise a TIL 1 domain in the interval 745–799 (CPANSRYELCGPACPTSCNGAAAPSNCSGRPCVEGCVCLPGFVASGGACVPASSC). A VWFD 2 domain is found at 862–1041 (GTCQGSGDPH…WQEETRPGCG (180 aa)). Intrachain disulfides connect Cys864-Cys1003 and Cys886-Cys1040. The TIL 2 domain occupies 1136 to 1189 (CPPHSHYEACSYGCPLSCGDLPVPGGCGSECHEGCVCDEGFALSGESCLPLASC). Positions 1250 to 1429 (STCQASGDPH…EEVVPDSPCL (180 aa)) constitute a VWFD 3 domain. Intrachain disulfides connect Cys1252–Cys1390 and Cys1274–Cys1428. An N-linked (GlcNAc...) (complex) asparagine glycan is attached at Asn1317. A TIL 3 domain is found at 1532–1585 (CPPNSHYELCADTCSLGCSALSAPPQCQDGCAEGCQCDSGFLYNGQACVPIQQC). Positions 1671 to 1854 (ATCWLWGDPH…RAPGWDPLCW (184 aa)) constitute a VWFD 4 domain. 3 cysteine pairs are disulfide-bonded: Cys1673–Cys1815, Cys1695–Cys1853, and Cys1704–Cys1812. The N-linked (GlcNAc...) asparagine glycan is linked to Asn1743. The 58-residue stretch at 1950 to 2007 (CPENSHYEVCGSPCPASCPSPAPLTTPAVCEGPCVEGCQCDAGFVLSADRCVPLNNGC) folds into the TIL 4 domain. Residues 2070–2253 (AECQAWGDPH…VSKPCPSPCT (184 aa)) enclose the VWFD 5 domain. Disulfide bonds link Cys2072/Cys2211 and Cys2094/Cys2252. An N-linked (GlcNAc...) asparagine glycan is attached at Asn2138. The 54-residue stretch at 2337–2390 (CPAHSHYELCGDSCPGSCPSLSAPEGCESACREGCVCDAGFVLSGDTCVPVGQC) folds into the TIL 5 domain. The region spanning 2451-2630 (TTCQASGDPH…EEVVPDSPCL (180 aa)) is the VWFD 6 domain. Cystine bridges form between Cys2453–Cys2591 and Cys2475–Cys2629. An N-linked (GlcNAc...) asparagine glycan is attached at Asn2518. Positions 2733 to 2786 (CPQNSHYELCADTCSLGCSALSAPLQCPDGCAEGCQCDSGFLYNGQACVPIQQC) constitute a TIL 6 domain. The region spanning 2872–3055 (ATCWLWGDPH…RAPGWDPLCW (184 aa)) is the VWFD 7 domain. Intrachain disulfides connect Cys2874/Cys3016, Cys2896/Cys3054, and Cys2905/Cys3013. One can recognise a TIL 7 domain in the interval 3151–3208 (CPENSHYEVCGPPCPASCPSPAPLTTPAVCEGPCVEGCQCDAGFVLSADRCVPLNNGC). One can recognise a VWFD 8 domain in the interval 3271-3454 (AECQAWGDPH…VSKPCPSPCT (184 aa)). Disulfide bonds link Cys3273-Cys3412 and Cys3295-Cys3453. Residues 3538-3591 (CPAHSHYELCGDSCPGSCPSLSAPEGCESACREGCVCDAGFVLSGDTCVPVGQC) form the TIL 8 domain. Residues 3652-3831 (TTCQASGDPH…EEVVPDSPCL (180 aa)) form the VWFD 9 domain. Cystine bridges form between Cys3654–Cys3792 and Cys3676–Cys3830. An N-linked (GlcNAc...) asparagine glycan is attached at Asn3719. Positions 3934–3987 (CPQNSHYELCADTCSLGCSALSAPLQCPDGCAEGCQCDSGFLYNGQACVPIQQC) constitute a TIL 9 domain. The VWFD 10 domain maps to 4073–4256 (ATCWLWGDPH…RAPGWDPLCW (184 aa)). Cystine bridges form between Cys4075–Cys4217, Cys4097–Cys4255, and Cys4106–Cys4214. N-linked (GlcNAc...) asparagine glycosylation is present at Asn4145. The region spanning 4352 to 4409 (CPENSHYEVCGPPCPASCPSPAPLTTPAVCEGPCVEGCQCDAGFVLSADRCVPLNNGC) is the TIL 10 domain. Residues 4472 to 4655 (AECQAWGDPH…VSKPCPSPCT (184 aa)) enclose the VWFD 11 domain. Disulfide bonds link Cys4474-Cys4613 and Cys4496-Cys4654. N-linked (GlcNAc...) asparagine glycosylation is present at Asn4540. One can recognise a TIL 11 domain in the interval 4739–4792 (CPAHSHYELCGDSCPVSCPSLSAPEGCESACREGCVCDAGFVLSGDTCVPVGQC). The VWFD 12 domain maps to 4854-5025 (GRCLANGGIH…RAPGSSKGCG (172 aa)). 2 disulfide bridges follow: Cys4856–Cys4986 and Cys4878–Cys5024. One can recognise a TIL 12 domain in the interval 5121–5174 (CPAHSHYSICTRTCQGSCAALSGLTGCTTRCFEGCECDDRFLLSQGVCIPVQDC). A VWFD 13 domain is found at 5233–5404 (GLCVLSVGAN…WRAQDFSPCY (172 aa)). A disulfide bond links Cys5235 and Cys5372.

In terms of assembly, interacts with the Fc portion of IgG and with MUC2. In terms of tissue distribution, mainly expressed in placenta and colon epithelium. Expressed in thyroid, and down-regulated in thyroid carcinomas. Present in serum, with higher levels in patients with various autoimmune diseases (at protein level).

It is found in the secreted. Functionally, may be involved in the maintenance of the mucosal structure as a gel-like component of the mucosa. The chain is IgGFc-binding protein (FCGBP) from Homo sapiens (Human).